The sequence spans 66 residues: LYR motif-containing protein PHYPADRAFT_186863 (66 aa).

Belongs to the complex I LYR family. LYRM9 subfamily.

This is LYR motif-containing protein PHYPADRAFT_186863 from Physcomitrium patens (Spreading-leaved earth moss).